A 534-amino-acid polypeptide reads, in one-letter code: Polyprotein pp62 (534 aa).

The protein belongs to the asfivirus polyprotein pp62 family. Monomer. Predominantly exists as a monomer, with very little dimers. Homodimerization seems to be linked to low pH. In terms of assembly, homodimer; disulfide-linked. Homotrimer; disulfide-linked. Homohexamer. Post-translationally, monoubiquitinated in vitro by viral UBCv1. In terms of processing, specific enzymatic cleavages in vivo by the viral pS273R protease yield mature proteins.

It is found in the host cytoplasm. Its subcellular location is the host perinuclear region. The protein resides in the virion. Functionally, essential for the correct assembly and maturation of the core of the virion. Component of the core shell. Binds to phosphatidylserine, which may enable the core shell binding with the inner membrane. In terms of biological role, component of the core shell. Binds to phosphatidylserine and DNA, which may link the core shell to the inner membrane and to the viral nucleoid. Its function is as follows. Component of the core shell. This chain is Polyprotein pp62, found in Ornithodoros (relapsing fever ticks).